Consider the following 257-residue polypeptide: MSGFENLNTDFYQTSYSIDDQSQQSYDYGGSGGPYSKQYAGYDYSQQGRFVPPDMMQPQQPYTGQIYQPTQAYTPASPQPFYGNSFEDEPPLLEELGINFDHIWQKTLTVLHPLKVADGSIMNETDLAGPMVFCLAFGATLLLAGKIQFGYVYGISAIGCLGMFCLLNLMSMTGVSFGCVASVLGYCLLPMILLSSFAVIFSLQGMVGIILTAGIIGWCSFSASKIFISALAMEGQQLLVAYPCALLYGVFALISVF.

Over 1–124 (MSGFENLNTD…KVADGSIMNE (124 aa)) the chain is Cytoplasmic. The interval 75 to 106 (PASPQPFYGNSFEDEPPLLEELGINFDHIWQK) is interaction with Sec23. A helical transmembrane segment spans residues 125-145 (TDLAGPMVFCLAFGATLLLAG). Position 146 (Lys146) is a topological domain, lumenal. A helical transmembrane segment spans residues 147-167 (IQFGYVYGISAIGCLGMFCLL). The Cytoplasmic segment spans residues 168–173 (NLMSMT). A helical membrane pass occupies residues 174–194 (GVSFGCVASVLGYCLLPMILL). Residues 195–196 (SS) are Lumenal-facing. The helical transmembrane segment at 197–217 (FAVIFSLQGMVGIILTAGIIG) threads the bilayer. Residues 218–236 (WCSFSASKIFISALAMEGQ) lie on the Cytoplasmic side of the membrane. A helical membrane pass occupies residues 237–257 (QLLVAYPCALLYGVFALISVF).

The protein belongs to the YIP1 family. In terms of assembly, interacts with the COPII coat components Sec23 (SEC23A and/or SEC23B) and Sec24 (SEC24A and/or SEC24B). Interacts with YIF1A. May interact with RAB1A. Interacts with YIPF3 and YIPF4.

Its subcellular location is the endoplasmic reticulum membrane. The protein localises to the golgi apparatus. It is found in the cis-Golgi network membrane. The protein resides in the cytoplasmic vesicle. It localises to the COPII-coated vesicle. Its function is as follows. Plays a role in transport between endoplasmic reticulum and Golgi. In pancreatic beta cells, required to transport proinsulin from endoplasmic reticulum into the Golgi. The sequence is that of Protein YIPF5 (YIPF5) from Macaca fascicularis (Crab-eating macaque).